A 167-amino-acid polypeptide reads, in one-letter code: L-alanine exporter AlaE (167 aa).

A run of 4 helical transmembrane segments spans residues 25–45 (GTEF…TGII), 50–70 (IAGM…ALMI), 105–125 (FQVP…GGLV), and 129–149 (LGAA…LNWV).

It belongs to the AlaE exporter family.

It is found in the cell inner membrane. Exports L-alanine. This Pantoea sp. (strain At-9b) protein is L-alanine exporter AlaE.